Reading from the N-terminus, the 146-residue chain is Large ribosomal subunit protein uL15 (146 aa).

Residues 1–13 (MKLHELKPAEGSR) show a composition bias toward basic and acidic residues. The interval 1–52 (MKLHELKPAEGSRKVRNRVGRGIGSGNGKTAGKGHKGQNARSGGGVRLGFEG) is disordered. 2 stretches are compositionally biased toward gly residues: residues 21–31 (RGIGSGNGKTA) and 42–52 (SGGGVRLGFEG).

Belongs to the universal ribosomal protein uL15 family. As to quaternary structure, part of the 50S ribosomal subunit.

Binds to the 23S rRNA. The polypeptide is Large ribosomal subunit protein uL15 (Bacillus anthracis (strain A0248)).